The chain runs to 159 residues: MEENKEFLLTQEGYDKLEEELENLKVVKRKEVAERIKVAISFGDLSENAEYDEAKKEQAQVEERILKLENMVRKAVIIDESKIDLNVVTIGSIVKVKDLEFDEEVEYTIVGSTEADPYDGKISNESPVGKALLGRAAKEVVEVQVPDGVAKFEILEIRR.

Residues 2 to 77 are a coiled coil; sequence EENKEFLLTQ…LENMVRKAVI (76 aa).

This sequence belongs to the GreA/GreB family.

In terms of biological role, necessary for efficient RNA polymerase transcription elongation past template-encoded arresting sites. The arresting sites in DNA have the property of trapping a certain fraction of elongating RNA polymerases that pass through, resulting in locked ternary complexes. Cleavage of the nascent transcript by cleavage factors such as GreA or GreB allows the resumption of elongation from the new 3'terminus. GreA releases sequences of 2 to 3 nucleotides. In Clostridioides difficile (strain 630) (Peptoclostridium difficile), this protein is Transcription elongation factor GreA.